We begin with the raw amino-acid sequence, 248 residues long: 14-3-3-like protein G-BOX factor 14 kappa (248 aa).

Residues S70, S112, and S193 each carry the phosphoserine modification. The residue at position 214 (T214) is a Phosphothreonine.

It belongs to the 14-3-3 family. In terms of assembly, interacts with the isocitrate dehydrogenase IDH3, and malate dehydrogenases MDH1 and MDH2. Interacts with CINV1.

It is found in the nucleus. The protein resides in the cytoplasm. In terms of biological role, is associated with a DNA binding complex that binds to the G box, a well-characterized cis-acting DNA regulatory element found in plant genes. Involved in the regulation of nutrient metabolism. Negative regulator of freezing tolerance that modulates cold-responsive C-repeat-binding factors (CBF) DREB1A AND DREB1B proteins stability by facilitating their ubiquitin-mediated degradation; this processus is counteracted by B1L. The chain is 14-3-3-like protein G-BOX factor 14 kappa from Arabidopsis thaliana (Mouse-ear cress).